A 250-amino-acid chain; its full sequence is N-acyl homoserine lactonase (250 aa).

His104, His106, Asp108, His109, His169, Asp191, and His235 together coordinate Zn(2+).

The protein belongs to the metallo-beta-lactamase superfamily. In terms of assembly, monomer. Zn(2+) is required as a cofactor.

The enzyme catalyses an N-acyl-L-homoserine lactone + H2O = an N-acyl-L-homoserine + H(+). Its activity is regulated as follows. Completely inhibited by Cu(2+) and Ag(+). Partially inhibited by Cr(2+), Pb(2+) and Fe(2+). Mg(2+), Ca(2+), Mn(2+), Co(2+), Ni(2+), Zn(2+) and Cd(2+) have no effect on activity. The chelating agents EDTA, 2,2'bipyridine and o-phenanthroline have no effect on enzyme activity. Hydrolyzes acyl homoserine lactones with varying lengths of acyl chains, with a slight preference for substrates without 3-oxo substitution at the C3 position. Has only residual activity towards non-acyl lactones, and no activity towards non-cyclic esters. The protein is N-acyl homoserine lactonase of Bacillus sp.